The following is a 192-amino-acid chain: MAAQIPIVATTSTPGIVRNSKKRPASPSHNGSSGGGYGASKKKKASASSFAQGISMEAMSENKMVPSEFSTGPVEKAAKPLPFKDPNFVHSGHGGAVAGKKNRTWKNLKQILASERALPWQLNDPNYFSIDAPPSFKPAKKYSDVSGLLANYTDPQSKLRFSTIEEFSYIRRLPSDVVTGYLALRKATSIVP.

The interval 1 to 44 (MAAQIPIVATTSTPGIVRNSKKRPASPSHNGSSGGGYGASKKKK) is disordered.

Component of the chromatin remodeling INO80 complex; specifically part of a complex module associated with the helicase ATP-binding and the helicase C-terminal domain of INO80. Component of some MLL1/MLL complex, at least composed of the core components KMT2A/MLL1, ASH2L, HCFC1/HCF1, WDR5 and RBBP5, as well as the facultative components BACC1, CHD8, E2F6, HSP70, INO80C, KANSL1, LAS1L, MAX, MCRS1, MGA, MYST1/MOF, PELP1, PHF20, PRP31, RING2, RUVB1/TIP49A, RUVB2/TIP49B, SENP3, TAF1, TAF4, TAF6, TAF7, TAF9 and TEX10.

The protein resides in the nucleus. Functionally, proposed core component of the chromatin remodeling INO80 complex which is involved in transcriptional regulation, DNA replication and probably DNA repair. The sequence is that of INO80 complex subunit C (INO80C) from Homo sapiens (Human).